The sequence spans 613 residues: Coiled-coil domain-containing protein 116 (613 aa).

Residues 41 to 68 (KPGRVPHPPSTCGSSALQGQRRNKRHPQ) form a disordered region. Polar residues predominate over residues 51 to 60 (TCGSSALQGQ). Residues 79–104 (ESQVLDSLETVVEKATERMAAMKTEA) are a coiled coil. Disordered regions lie at residues 329 to 395 (CRDG…AQVA), 509 to 541 (RQASRLSTSHCSTETPSVQQEPATHTAQDQATE), and 565 to 613 (MSAC…EDGV). S386 carries the phosphoserine modification. The span at 512–539 (SRLSTSHCSTETPSVQQEPATHTAQDQA) shows a compositional bias: polar residues. Basic and acidic residues predominate over residues 577–589 (KSKDMDNEGRDKA). The span at 590–613 (EIEDEDEDEFKDEDQDEDKDEDGV) shows a compositional bias: acidic residues.

The protein localises to the cytoplasm. Its subcellular location is the cytoskeleton. The protein resides in the microtubule organizing center. It is found in the centrosome. The polypeptide is Coiled-coil domain-containing protein 116 (CCDC116) (Homo sapiens (Human)).